Here is a 3535-residue protein sequence, read N- to C-terminus: Lysosomal-trafficking regulator (3535 aa).

The interval 412–436 is disordered; it reads MESSASTAMPKQQQHPRHKRQRSSQ. One copy of the WD 1 repeat lies at 689 to 736; the sequence is TLSRRLIQLQLNSSDRASQLFQALLYKCSKHSRAKFWLDESSTPAKLE. Polar residues predominate over residues 1066 to 1096; sequence STHQEPTGVVNSPSGDSQQPRPRARSFNSGS. Disordered stretches follow at residues 1066 to 1132 and 1592 to 1613; these read STHQ…NAGV and GEGQPTGRSPGSSSSSRSTLDG. Positions 1596–1610 are enriched in low complexity; sequence PTGRSPGSSSSSRST. Residues 2686 to 2784 form the BEACH-type PH domain; sequence SLNSQILYNF…MREVFCDKIV (99 aa). The region spanning 2784 to 3081 is the BEACH domain; it reads VATPDQSKVI…QLFKSPHPAS (298 aa). The disordered stretch occupies residues 3254–3287; sequence GIGGGGSERVDEAGNLHPTSSASSVNSSSISSGG. Residues 3273–3285 show a composition bias toward low complexity; it reads SSASSVNSSSISS. 3 WD repeats span residues 3307-3346, 3442-3486, and 3489-3527; these read RHTDEITCITLSVEFKIAVTAGRDGIAVIWDLNDWSYVRT, VHED…FVSE, and TGTSPIRSICYSTHQHLVVLTRESHIQVWESEGLYGNAP.

Interacts with Rab5; the interaction is independent of GDP or GTP. Interacts with msps.

The protein localises to the vesicle. It is found in the cytoplasm. Its subcellular location is the cytoskeleton. It localises to the spindle. The protein resides in the spindle pole. In terms of biological role, adapter protein that regulates intracellular membrane fusion reactions. Regulates the fusion of lysosome-related organelles. Promotes microtubules nucleation and centrosomal recruitment of microtubule nucleating proteins such as msps. In syncytial embryos, during the formation of yolk granules, suppresses vesicle fusion events with lipid droplets, possibly via interaction with Rab5. In the eye, regulates pigment granules size. In hemocytes, required for the late steps of bacteria phagocytosis. In fat body, required for autophagosome maturation. The protein is Lysosomal-trafficking regulator of Drosophila melanogaster (Fruit fly).